The chain runs to 140 residues: Nucleoside diphosphate kinase (140 aa).

Positions 11, 59, 87, 93, 104, and 114 each coordinate ATP. The active-site Pros-phosphohistidine intermediate is the H117.

It belongs to the NDK family. Homotetramer. Requires Mg(2+) as cofactor.

It localises to the cytoplasm. The enzyme catalyses a 2'-deoxyribonucleoside 5'-diphosphate + ATP = a 2'-deoxyribonucleoside 5'-triphosphate + ADP. It carries out the reaction a ribonucleoside 5'-diphosphate + ATP = a ribonucleoside 5'-triphosphate + ADP. In terms of biological role, major role in the synthesis of nucleoside triphosphates other than ATP. The ATP gamma phosphate is transferred to the NDP beta phosphate via a ping-pong mechanism, using a phosphorylated active-site intermediate. This is Nucleoside diphosphate kinase from Francisella tularensis subsp. tularensis (strain SCHU S4 / Schu 4).